A 910-amino-acid chain; its full sequence is Alanine--tRNA ligase (910 aa).

Over residues 488-505 the composition is skewed to basic and acidic residues; the sequence is RHEEKKEDSKSEKGENTA. The disordered stretch occupies residues 488 to 507; the sequence is RHEEKKEDSKSEKGENTAEK. His-614, His-618, Cys-718, and His-722 together coordinate Zn(2+).

This sequence belongs to the class-II aminoacyl-tRNA synthetase family. The cofactor is Zn(2+).

The protein localises to the cytoplasm. The catalysed reaction is tRNA(Ala) + L-alanine + ATP = L-alanyl-tRNA(Ala) + AMP + diphosphate. Functionally, catalyzes the attachment of alanine to tRNA(Ala) in a two-step reaction: alanine is first activated by ATP to form Ala-AMP and then transferred to the acceptor end of tRNA(Ala). Also edits incorrectly charged Ser-tRNA(Ala) and Gly-tRNA(Ala) via its editing domain. The chain is Alanine--tRNA ligase from Methanococcus aeolicus (strain ATCC BAA-1280 / DSM 17508 / OCM 812 / Nankai-3).